Here is a 338-residue protein sequence, read N- to C-terminus: uncharacterized protein (338 aa).

The chain crosses the membrane as a helical span at residues 20–40 (IFFTLTFSLSNLFLAICYLFL).

The protein resides in the membrane. This is an uncharacterized protein from Schizosaccharomyces pombe (strain 972 / ATCC 24843) (Fission yeast).